We begin with the raw amino-acid sequence, 589 residues long: Ubiquilin-1 (589 aa).

Over residues 1-11 the composition is skewed to gly residues; the sequence is MAESGESGGPP. 2 disordered regions span residues 1–35 and 110–145; these read MAES…AEPK and NRPQ…ATSN. Ala2 bears the N-acetylalanine mark. Positions 12 to 35 are enriched in low complexity; it reads GSQDSAAGAEGAGAPAAAASAEPK. Positions 37-111 constitute a Ubiquitin-like domain; it reads MKVTVKTPKE…VHLVIKTQNR (75 aa). Residues 110–124 are compositionally biased toward polar residues; it reads NRPQDHSAQQTNTAG. Residues 125–145 show a composition bias toward low complexity; it reads SNVTTSSTPNSNSTSGSATSN. The tract at residues 178–428 is interaction with UBXN4; sequence QLLSNPEMMV…LNNPLFAGNP (251 aa). 2 consecutive STI1 domains span residues 182 to 210 and 212 to 251; these read NPEM…QLIM and NPQM…MQEM. Positions 295 to 371 are disordered; sequence PFASLVSNTS…NLVPGVGASM (77 aa). The segment covering 299–313 has biased composition (polar residues); sequence LVSNTSSGEGSQPSR. The span at 327–360 shows a compositional bias: low complexity; sequence QTSQSSSASSGTASTVGGTTGSTASGTSGQSTTA. STI1 domains are found at residues 387–434 and 438–470; these read NPQL…QEQM and LPTF…QQGL. Residues 488–520 form a disordered region; it reads LGALGSTGGSSGTNGSNATPSENTSPTAGTTEP. Over residues 489 to 499 the composition is skewed to gly residues; the sequence is GALGSTGGSSG. The span at 509–520 shows a compositional bias: polar residues; sequence ENTSPTAGTTEP. Positions 546-586 constitute a UBA domain; the sequence is RFQQQLEQPSAMGFLNREANLQALIATGGDINAAIERLLGS.

As to quaternary structure, monomer and homodimer. Heterodimer with UBQLN2. Binds CD47, NBL1, GABRA1, GABRA2, GABRA3, GABRA6, GABRB1, GABRB2 and GABRB3. Binds UBE3A, BTRC, P4HB and MTOR. Interacts with the proteasome 19S subunit. Interacts (via ubiquitin-like domain) with TREX1; the interaction is direct and may control TREX1 subcellular location. Forms a complex with UBXN4 and VCP. Interacts (via UBA domain) with UBQLN4 (via ubiquitin-like domain). Found in a complex with UBQLN2 and MAP1LC3A/B/C. The monomeric form interacts with PSEN1 and PSEN2. Interacts with ORAI1. Interacts (via UBA domain) with TICAM1. Interacts with EPS15. Interacts (via UBA domain) with UBA52 and (via ubiquitin-like domain) with PSMD3 and PSMD4. Interacts with HERPUD1. Interacts with MAP1LC3A/B/C in the presence of UBQLN4. Interacts (via ubiquitin-like domain) with EPS15 (via UIM domains) and both the ubiquitinated and non-ubiquitinated forms can interact with EPS15. Interacts (via ubiquitin-like domain) with EPS15L1, HGS (via UIM domain) and STAM2 (via UIM domain). Interacts with BCL2L10/BCL-B; in the cytoplasm. Degraded during both macroautophagy and during chaperone-mediated autophagy (CMA). In terms of processing, phosphorylated. Post-translationally, ubiquitinated.

The protein localises to the nucleus. It is found in the cytoplasm. Its subcellular location is the endoplasmic reticulum. The protein resides in the cytoplasmic vesicle. It localises to the autophagosome. The protein localises to the cell membrane. Its function is as follows. Plays an important role in the regulation of different protein degradation mechanisms and pathways including ubiquitin-proteasome system (UPS), autophagy and endoplasmic reticulum-associated protein degradation (ERAD) pathway. Mediates the proteasomal targeting of misfolded or accumulated proteins for degradation by binding (via UBA domain) to their polyubiquitin chains and by interacting (via ubiquitin-like domain) with the subunits of the proteasome. Plays a role in the ERAD pathway via its interaction with ER-localized proteins UBXN4, VCP and HERPUD1 and may form a link between the polyubiquitinated ERAD substrates and the proteasome. Plays a role in unfolded protein response (UPR) by attenuating the induction of UPR-inducible genes, DDTI3/CHOP, HSPA5 and PDIA2 during ER stress. Involved in the regulation of macroautophagy and autophagosome formation; required for maturation of autophagy-related protein LC3 from the cytosolic form LC3-I to the membrane-bound form LC3-II and may assist in the maturation of autophagosomes to autolysosomes by mediating autophagosome-lysosome fusion. Negatively regulates the TICAM1/TRIF-dependent toll-like receptor signaling pathway by decreasing the abundance of TICAM1 via the autophagic pathway. Promotes the ubiquitination and lysosomal degradation of ORAI1, consequently down-regulating the ORAI1-mediated Ca2+ mobilization. Suppresses the maturation and proteasomal degradation of amyloid beta A4 protein (A4) by stimulating the lysine 63 (K63)-linked polyubiquitination. Delays the maturation of A4 by sequestering it in the Golgi apparatus and preventing its transport to the cell surface for subsequent processing. Ubiquitinates BCL2L10 and thereby stabilizes protein abundance. The chain is Ubiquilin-1 (UBQLN1) from Pongo abelii (Sumatran orangutan).